An 85-amino-acid polypeptide reads, in one-letter code: U4-theraphotoxin-Hhn1a (85 aa).

The signal sequence occupies residues Met-1–Ala-22. A propeptide spanning residues Glu-23–Arg-48 is cleaved from the precursor. Intrachain disulfides connect Cys-52–Cys-66, Cys-56–Cys-77, and Cys-71–Cys-82.

The protein belongs to the neurotoxin 12 (Hwtx-2) family. 02 (Hwtx-2) subfamily. Monomer. As to expression, expressed by the venom gland.

It is found in the secreted. Neurotoxin active on both insects and mammals. The chain is U4-theraphotoxin-Hhn1a from Cyriopagopus hainanus (Chinese bird spider).